A 331-amino-acid polypeptide reads, in one-letter code: Glutamyl-tRNA reductase (331 aa).

Residues 49–52 (TCNR), S107, 112–114 (EDQ), and Q118 each bind substrate. The active-site Nucleophile is C50. 184–189 (GNGEIG) is a binding site for NADP(+).

It belongs to the glutamyl-tRNA reductase family. Homodimer.

It carries out the reaction (S)-4-amino-5-oxopentanoate + tRNA(Glu) + NADP(+) = L-glutamyl-tRNA(Glu) + NADPH + H(+). It participates in porphyrin-containing compound metabolism; protoporphyrin-IX biosynthesis; 5-aminolevulinate from L-glutamyl-tRNA(Glu): step 1/2. Functionally, catalyzes the NADPH-dependent reduction of glutamyl-tRNA(Glu) to glutamate 1-semialdehyde (GSA). The sequence is that of Glutamyl-tRNA reductase from Acetivibrio thermocellus (strain ATCC 27405 / DSM 1237 / JCM 9322 / NBRC 103400 / NCIMB 10682 / NRRL B-4536 / VPI 7372) (Clostridium thermocellum).